A 543-amino-acid polypeptide reads, in one-letter code: Organic anion transporter 3 (543 aa).

Topologically, residues 1-21 (MTFAELVDRVGSKGPFQLLHT) are cytoplasmic. Residues 22–42 (VLLGLPILGMANHNLLQIFTA) traverse the membrane as a helical segment. Residues 43–124 (PTPAHHCRPP…LVCSSSKLKE (82 aa)) are Extracellular-facing. N81 carries N-linked (GlcNAc...) asparagine glycosylation. A helical membrane pass occupies residues 125–145 (MAQSVFMAGILVGGLVLGALS). Residues 146–151 (DRFGRK) lie on the Cytoplasmic side of the membrane. The chain crosses the membrane as a helical span at residues 152 to 172 (PILIFSYLLLGASGSGAAFSP). Over 173 to 181 (TFSIYAVFR) the chain is Extracellular. The chain crosses the membrane as a helical span at residues 182-202 (FLCGFSISGISLSTAILNVEW). Residues 203–212 (VSTRFRAIKS) are Cytoplasmic-facing. Residues 213 to 233 (IAVGFFYTFGQFILPGLAYAI) traverse the membrane as a helical segment. Residues 234-237 (PQWR) are Extracellular-facing. A helical membrane pass occupies residues 238 to 258 (WLQLTVSVPFLTFFLLSWWLP). Residues 259-328 (ESIRWMVLSG…FRTPVLRRVT (70 aa)) are Cytoplasmic-facing. The chain crosses the membrane as a helical span at residues 329–349 (LCLSLAWFATGFAYYSLAMGV). Residues 350–355 (EEFGVN) lie on the Extracellular side of the membrane. A helical transmembrane segment spans residues 356–376 (LYVLQLIFGGVDVPAKFITML). Residues 377–388 (SISYLGRHITEG) lie on the Cytoplasmic side of the membrane. A helical membrane pass occupies residues 389-409 (IVLLLAGGCILALIFVPLDLM). Topologically, residues 410-412 (TLR) are extracellular. The chain crosses the membrane as a helical span at residues 413 to 433 (TVLAVFGKGCLSGSFSCLFLY). Residues 434–472 (TSELYPTVIRQTGMGASNLWARVGSMTAPLVKITGELQP) are Cytoplasmic-facing. A helical transmembrane segment spans residues 473–493 (FIPNIIFGTIALLGGSAALFL). Over 494-543 (PETLNRPLPETIEDIETWSLRAKEPKPEPEAEKSSQRIPLQPCEPGPGPS) the chain is Extracellular. The disordered stretch occupies residues 513–543 (LRAKEPKPEPEAEKSSQRIPLQPCEPGPGPS). Over residues 514 to 528 (RAKEPKPEPEAEKSS) the composition is skewed to basic and acidic residues.

It belongs to the major facilitator (TC 2.A.1) superfamily. Organic cation transporter (TC 2.A.1.19) family. As to expression, expressed in kidney.

It is found in the basolateral cell membrane. It catalyses the reaction estrone 3-sulfate(out) + glutarate(in) = estrone 3-sulfate(in) + glutarate(out). It carries out the reaction estrone 3-sulfate(in) + 2-oxoglutarate(out) = estrone 3-sulfate(out) + 2-oxoglutarate(in). The enzyme catalyses glutarate(in) + 2-oxoglutarate(out) = glutarate(out) + 2-oxoglutarate(in). The catalysed reaction is urate(in) + 2-oxoglutarate(out) = urate(out) + 2-oxoglutarate(in). It catalyses the reaction taurocholate(out) + glutarate(in) = taurocholate(in) + glutarate(out). It carries out the reaction dehydroepiandrosterone 3-sulfate(out) + glutarate(in) = dehydroepiandrosterone 3-sulfate(in) + glutarate(out). The enzyme catalyses prostaglandin F2alpha(out) + glutarate(in) = prostaglandin F2alpha(in) + glutarate(out). The catalysed reaction is prostaglandin F2alpha(out) + 2-oxoglutarate(in) = prostaglandin F2alpha(in) + 2-oxoglutarate(out). It catalyses the reaction (R)-carnitine(out) + 2-oxoglutarate(in) = (R)-carnitine(in) + 2-oxoglutarate(out). It carries out the reaction glutarate(in) + (R)-carnitine(out) = glutarate(out) + (R)-carnitine(in). The enzyme catalyses prostaglandin E2(out) + 2-oxoglutarate(in) = prostaglandin E2(in) + 2-oxoglutarate(out). The catalysed reaction is prostaglandin E2(out) + glutarate(in) = prostaglandin E2(in) + glutarate(out). It catalyses the reaction urate(in) + glutarate(out) = urate(out) + glutarate(in). It carries out the reaction taurocholate(out) + 2-oxoglutarate(in) = taurocholate(in) + 2-oxoglutarate(out). The enzyme catalyses dehydroepiandrosterone 3-sulfate(out) + 2-oxoglutarate(in) = dehydroepiandrosterone 3-sulfate(in) + 2-oxoglutarate(out). The catalysed reaction is kynurenate(out) + a dicarboxylate(in) = kynurenate(in) + a dicarboxylate(out). It catalyses the reaction (indol-3-yl)acetate(out) + a dicarboxylate(in) = (indol-3-yl)acetate(in) + a dicarboxylate(out). It carries out the reaction indoxyl sulfate(out) + a dicarboxylate(in) = indoxyl sulfate(in) + a dicarboxylate(out). The enzyme catalyses N-benzoylglycine(out) + a dicarboxylate(in) = N-benzoylglycine(in) + a dicarboxylate(out). The catalysed reaction is 3-carboxy-4-methyl-5-propyl-2-furanpropanoate(out) + a dicarboxylate(in) = 3-carboxy-4-methyl-5-propyl-2-furanpropanoate(in) + a dicarboxylate(out). It catalyses the reaction (6R)-L-erythro-5,6,7,8-tetrahydrobiopterin(out) + a dicarboxylate(in) = (6R)-L-erythro-5,6,7,8-tetrahydrobiopterin(in) + a dicarboxylate(out). It carries out the reaction L-erythro-7,8-dihydrobiopterin(out) + a dicarboxylate(in) = L-erythro-7,8-dihydrobiopterin(in) + a dicarboxylate(out). The enzyme catalyses L-sepiapterin(out) + a dicarboxylate(in) = L-sepiapterin(in) + a dicarboxylate(out). Functionally, functions as an organic anion/dicarboxylate exchanger that couples organic anion uptake indirectly to the sodium gradient. Transports organic anions such as estrone 3-sulfate (E1S) and urate in exchange for dicarboxylates such as glutarate or ketoglutarate (2-oxoglutarate). Plays an important role in the excretion of endogenous and exogenous organic anions, especially from the kidney and the brain. E1S transport is pH- and chloride-dependent and may also involve E1S/cGMP exchange. Responsible for the transport of prostaglandin E2 (PGE2) and prostaglandin F2(alpha) (PGF2(alpha)) in the basolateral side of the renal tubule. Involved in the transport of neuroactive tryptophan metabolites kynurenate and xanthurenate. Functions as a biopterin transporters involved in the uptake and the secretion of coenzymes tetrahydrobiopterin (BH4), dihydrobiopterin (BH2) and sepiapterin to urine, thereby determining baseline levels of blood biopterins. May be involved in the basolateral transport of steviol, a metabolite of the popular sugar substitute stevioside. May participate in the detoxification/ renal excretion of drugs and xenobiotics, such as the histamine H(2)-receptor antagonists fexofenadine and cimetidine, the antibiotic benzylpenicillin (PCG), the anionic herbicide 2,4-dichloro-phenoxyacetate (2,4-D), the diagnostic agent p-aminohippurate (PAH), the antiviral acyclovir (ACV), and the mycotoxin ochratoxin (OTA), by transporting these exogenous organic anions across the cell membrane in exchange for dicarboxylates such as 2-oxoglutarate. Contributes to the renal uptake of potent uremic toxins (indoxyl sulfate (IS), indole acetate (IA), hippurate/N-benzoylglycine (HA) and 3-carboxy-4-methyl-5-propyl-2-furanpropionate (CMPF)), pravastatin, PCG, E1S and dehydroepiandrosterone sulfate (DHEAS), and is partly involved in the renal uptake of temocaprilat (an angiotensin-converting enzyme (ACE) inhibitor). May contribute to the release of cortisol in the adrenals. Involved in one of the detoxification systems on the choroid plexus (CP), removes substrates such as E1S or taurocholate (TC), PCG, 2,4-D and PAH, from the cerebrospinal fluid (CSF) to the blood for eventual excretion in urine and bile. Also contributes to the uptake of several other organic compounds such as the prostanoids prostaglandin E(2) and prostaglandin F(2-alpha), L-carnitine, and the therapeutic drugs allopurinol, 6-mercaptopurine (6-MP) and 5-fluorouracil (5-FU). Mediates the transport of PAH, PCG, and the statins pravastatin and pitavastatin, from the cerebrum into the blood circulation across the blood-brain barrier (BBB). In summary, plays a role in the efflux of drugs and xenobiotics, helping reduce their undesired toxicological effects on the body. This is Organic anion transporter 3 (SLC22A8) from Sus scrofa (Pig).